The sequence spans 429 residues: Phosphoribosylamine--glycine ligase (429 aa).

In terms of domain architecture, ATP-grasp spans 109–316 (KDFLARHQIP…LVDLCLAACD (208 aa)). 135-196 (LREKGAPIVI…EEFLDGEEAS (62 aa)) serves as a coordination point for ATP. 2 residues coordinate Mg(2+): Glu286 and Asn288.

The protein belongs to the GARS family. As to quaternary structure, monomer. Mg(2+) is required as a cofactor. Requires Mn(2+) as cofactor.

It carries out the reaction 5-phospho-beta-D-ribosylamine + glycine + ATP = N(1)-(5-phospho-beta-D-ribosyl)glycinamide + ADP + phosphate + H(+). Its pathway is purine metabolism; IMP biosynthesis via de novo pathway; N(1)-(5-phospho-D-ribosyl)glycinamide from 5-phospho-alpha-D-ribose 1-diphosphate: step 2/2. This Salmonella typhimurium (strain LT2 / SGSC1412 / ATCC 700720) protein is Phosphoribosylamine--glycine ligase.